The following is a 459-amino-acid chain: Interleukin-7 receptor subunit alpha (459 aa).

A signal peptide spans 1 to 20 (MTILGTTFGVFFSLLQVVSG). Topologically, residues 21–241 (ESGYAQNGDL…NNHSGETNPT (221 aa)) are extracellular. A disulfide bridge links cysteine 42 with cysteine 57. 2 N-linked (GlcNAc...) asparagine glycosylation sites follow: asparagine 49 and asparagine 65. 2 cysteine pairs are disulfide-bonded: cysteine 74-cysteine 82 and cysteine 108-cysteine 118. Residues 131 to 231 (APFDLSVIYR…PSYYFRTPEI (101 aa)) enclose the Fibronectin type-III domain. Asparagine 182 is a glycosylation site (N-linked (GlcNAc...) asparagine). Positions 217 to 221 (WSEWS) match the WSXWS motif motif. A helical membrane pass occupies residues 242–262 (LLTISILSVLSVVLLVILACV). Topologically, residues 263 to 459 (LWKKRIKPII…VTMSSFCQKR (197 aa)) are cytoplasmic. The short motif at 272–280 (IWPSLPDHK) is the Box 1 motif element. Threonine 282 carries the post-translational modification Phosphothreonine; by PKC. Positions 327 to 357 (TVPPQLEESETQRPGGDVQSPSWPSENVVTT) are disordered. The segment covering 345 to 357 (QSPSWPSENVVTT) has biased composition (polar residues).

The protein belongs to the type I cytokine receptor family. Type 4 subfamily. In terms of assembly, the IL7 receptor is a heterodimer of IL7R and IL2RG. The TSLP receptor is a heterodimer of CRLF2 and IL7R. Interacts with CD53. N-glycosylated IL-7Ralpha binds IL7 300-fold more tightly than the unglycosylated form. Post-translationally, ubiquitinated by MARCHF8; leading to lysosomal degradation.

It localises to the cell membrane. Functionally, receptor for interleukin-7. Also acts as a receptor for thymic stromal lymphopoietin (TSLP). The sequence is that of Interleukin-7 receptor subunit alpha (IL7R) from Callithrix jacchus (White-tufted-ear marmoset).